Reading from the N-terminus, the 278-residue chain is Adenosylcobinamide-GDP ribazoletransferase (278 aa).

7 consecutive transmembrane segments (helical) span residues 35–55 (VVGI…NFIL), 62–82 (AVLP…TGAL), 116–136 (GALA…SLTI), 141–161 (AAVY…VVSC), 185–205 (LIVA…MPFI), 222–242 (LIIV…SKLI), and 257–277 (LLEI…TFFI).

The protein belongs to the CobS family. The cofactor is Mg(2+).

It localises to the cell inner membrane. It catalyses the reaction alpha-ribazole + adenosylcob(III)inamide-GDP = adenosylcob(III)alamin + GMP + H(+). It carries out the reaction alpha-ribazole 5'-phosphate + adenosylcob(III)inamide-GDP = adenosylcob(III)alamin 5'-phosphate + GMP + H(+). It functions in the pathway cofactor biosynthesis; adenosylcobalamin biosynthesis; adenosylcobalamin from cob(II)yrinate a,c-diamide: step 7/7. Functionally, joins adenosylcobinamide-GDP and alpha-ribazole to generate adenosylcobalamin (Ado-cobalamin). Also synthesizes adenosylcobalamin 5'-phosphate from adenosylcobinamide-GDP and alpha-ribazole 5'-phosphate. The chain is Adenosylcobinamide-GDP ribazoletransferase from Fusobacterium nucleatum subsp. nucleatum (strain ATCC 25586 / DSM 15643 / BCRC 10681 / CIP 101130 / JCM 8532 / KCTC 2640 / LMG 13131 / VPI 4355).